Reading from the N-terminus, the 278-residue chain is Transmembrane protein 41B (278 aa).

The tract at residues 1-31 (MQVHERSHTGGHTCQCNHGSEKKAPATGKVH) is disordered. 6 consecutive transmembrane segments (helical) span residues 39-59 (MSLL…FLVY), 96-116 (FYVE…TFAI), 132-154 (FPLA…YLLS), 184-204 (LINY…FINI), 212-232 (PLKV…FVAI), and 249-269 (SWNS…PAIF). A VTT domain; required for its function in autophagy region spans residues 127 to 238 (GFLYPFPLAL…FVAIKAGTTL (112 aa)).

This sequence belongs to the TMEM41 family.

It localises to the endoplasmic reticulum membrane. The protein localises to the endomembrane system. It catalyses the reaction a 1,2-diacyl-sn-glycero-3-phospho-L-serine(in) = a 1,2-diacyl-sn-glycero-3-phospho-L-serine(out). The enzyme catalyses cholesterol(in) = cholesterol(out). It carries out the reaction a 1,2-diacyl-sn-glycero-3-phosphocholine(in) = a 1,2-diacyl-sn-glycero-3-phosphocholine(out). The catalysed reaction is a 1,2-diacyl-sn-glycero-3-phosphoethanolamine(in) = a 1,2-diacyl-sn-glycero-3-phosphoethanolamine(out). Phospholipid scramblase involved in lipid homeostasis and membrane dynamics processes. Has phospholipid scramblase activity toward cholesterol and phosphatidylserine, as well as phosphatidylethanolamine and phosphatidylcholine. Required for autophagosome formation: participates in early stages of autophagosome biogenesis at the endoplasmic reticulum (ER) membrane by reequilibrating the leaflets of the ER as lipids are extracted by atg2 (atg2a or atg2b) to mediate autophagosome assembly. In addition to autophagy, involved in other processes in which phospholipid scramblase activity is required. Required for normal motor neuron development. This Xenopus tropicalis (Western clawed frog) protein is Transmembrane protein 41B.